The sequence spans 447 residues: Trigger factor (447 aa).

Residues G164 to P249 enclose the PPIase FKBP-type domain.

Belongs to the FKBP-type PPIase family. Tig subfamily.

It localises to the cytoplasm. The catalysed reaction is [protein]-peptidylproline (omega=180) = [protein]-peptidylproline (omega=0). Functionally, involved in protein export. Acts as a chaperone by maintaining the newly synthesized protein in an open conformation. Functions as a peptidyl-prolyl cis-trans isomerase. The polypeptide is Trigger factor (Psychrobacter arcticus (strain DSM 17307 / VKM B-2377 / 273-4)).